The primary structure comprises 131 residues: UPF0102 protein YraN (131 aa).

Polar residues predominate over residues 1–19 (MATVPTRSGSPRQLTTKQT). The disordered stretch occupies residues 1–21 (MATVPTRSGSPRQLTTKQTGD).

This sequence belongs to the UPF0102 family.

This chain is UPF0102 protein YraN, found in Shigella flexneri serotype 5b (strain 8401).